The primary structure comprises 806 residues: MGIQGLLQFIKDASEPMHVKKYRGQTVAVDTYCWLHKGAFSCAEKLAKGEPTDQYVSYCMKFVDMLLSFGVKPILVFDGRNLPSKQEVEKSRRERRQANLQKGKQLLREGKITEARECFTRSVNITPSMAHDVIRAARTRGVDCVVAPYEADAQLAFLNKSDIAQAVITEDSDLLAFGCKKVILKMDKQGNGLEIEQCHLGRCKSLGNIFTEEKFRYMCILSGCDYLQSLYGIGLGKACKLLRMANNPDILKVIKKMGQYLKMDISVPEEYIEGFTKANNTFLYQLVFDPLRRKVVPLNPYPDHINPAALSYAGTNVGDEKGLQMALGNLDINTMQRIDDFNPDAPQTQPPKAPRSSSWNDRCDKTATTQASIWSQNYEPGCTKSQSPTSPKRPPPTRGKERIVSVQSLKLPQRESQVKRPREDTSLSVDDLLEQYTAGVKRHCPETQPTTKPLTNDNKVSKENHCGSTSGPFRPRNRFATLLQWRNRSEEGTEEQGTCSRFFCHDESNIAETQEDSKQDSSQSVESQEKHVSQSGGDTSSLCEEPEREQDKDEPSSPPASPSCSSRPASVGLGVFSWSGTTKELNKSVSHPARDSTERQRSSSTPSGLSTLQQFHRNKARISWAGPGLSLSSSPVEGSEDAGNSPGSPPSQDSAYFSQSSSISASVENSLVTEDNSDKEKERDSVVSNSPSSSPLDRLKPAVNRTKVSGLSRKGACGQGKGGKIETSAPARASGLRRKPSGKKNVNNENSPGLQATISGLWGAFSFKKDSPKLSATKKGEPMSPVGENVVMETTQADKEIFIIAE.

The segment at Met1–Asn99 is N-domain. 7 residues coordinate Mg(2+): Asp30, Asp78, Glu150, Asp152, Asp171, Asp173, and Asp225. The tract at residues Arg138 to Ser229 is I-domain. Disordered stretches follow at residues Arg337–Ser426, His443–Pro475, and Glu512–Leu754. Polar residues predominate over residues Arg355–Tyr378. Over residues Pro412 to Thr425 the composition is skewed to basic and acidic residues. Polar residues-rich tracts occupy residues Thr447–Asn458, Ser533–Leu542, and Trp578–Val589. A compositionally biased stretch (basic and acidic residues) spans Pro592–Arg601. The span at Ser602 to Phe615 shows a compositional bias: polar residues. Positions Ser651–Ser670 are enriched in low complexity. Residues Asn676 to Ser685 show a composition bias toward basic and acidic residues. Residues Val686–Leu696 are compositionally biased toward low complexity. Residues Lys744–Leu754 are compositionally biased toward polar residues.

This sequence belongs to the XPG/RAD2 endonuclease family. EXO1 subfamily. It depends on Mg(2+) as a cofactor.

It is found in the nucleus. 5'-&gt;3' double-stranded DNA exonuclease which may also contain a cryptic 3'-&gt;5' double-stranded DNA exonuclease activity. Also exhibits endonuclease activity against 5'-overhanging flap structures similar to those generated by displacement synthesis when DNA polymerase encounters the 5'-end of a downstream Okazaki fragment. Required for DNA mismatch repair (MMR). This Danio rerio (Zebrafish) protein is Exonuclease 1 (exo1).